We begin with the raw amino-acid sequence, 353 residues long: Replication factor C subunit 2 (353 aa).

N-acetylmethionine is present on Met-1. Residues Val-28, Arg-32, 65–73 (GPPGTGKTS), Asn-171, and Arg-229 each bind ATP.

This sequence belongs to the activator 1 small subunits family. As to quaternary structure, replication factor C (RFC) is a heteropentamer of subunits RFC1, RFC2, RFC3, RFC4 and RFC5 and forms a complex with POL30/PCNA in the presence of ATP. Component of the RAD24-RFC complex which consists of RAD14, RFC2, RFC3, RFC4 and RFC5 and associates with the checkpoint clamp DDC1:MEC3:RAD17 complex. Component of the ELG1-RFC complex which consists of ELG1, RFC2, RFC3, RFC4 and RFC5. Component of the CTF18-RFC complex, which consists of CTF18, CTF8, DCC1, RFC2, RFC3, RFC4 and RFC5. RFC2 interacts with ECO1.

It is found in the nucleus. Its function is as follows. Component of ATP-dependent clamp loader (RFC and RFC-like) complexes for DNA clamps, such as the POL30/PCNA homotrimer and the checkpoint clamp DDC1:MEC3:RAD17 complex. During a clamp loading circle, the RFC:clamp complex binds to DNA and the recognition of the double-stranded/single-stranded junction stimulates ATP hydrolysis by RFC. The complex presumably provides bipartite ATP sites in which one subunit supplies a catalytic site for hydrolysis of ATP bound to the neighboring subunit. Dissociation of RFC from the clamp leaves the clamp encircling DNA. Component of the replication factor C (RFC or activator 1) complex which loads POL30/PCNA and acts during elongation of primed DNA templates by DNA polymerase delta and epsilon. RFC has an essential but redundant activity in sister chromatid cohesion establishment. Component of the RFC-like complex CTF18-RFC which is required for efficient establishment of chromosome cohesion during S-phase and may load or unload POL30/PCNA. Component of the RFC-like RAD24-RFC complex which loads the checkpoint clamp DDC1:MEC3:RAD17 complex and is involved in DNA repair pathways. Component of the RFC-like ELG1-RFC complex which appears to have a role in DNA replication, replication fork re-start, recombination and repair. RFC2 binds ATP and single-stranded DNA. This Saccharomyces cerevisiae (strain ATCC 204508 / S288c) (Baker's yeast) protein is Replication factor C subunit 2 (RFC2).